The sequence spans 427 residues: 3-phosphoshikimate 1-carboxyvinyltransferase (427 aa).

Residues Lys22, Ser23, and Arg27 each contribute to the 3-phosphoshikimate site. Lys22 serves as a coordination point for phosphoenolpyruvate. Phosphoenolpyruvate is bound by residues Gly96 and Arg124. Residues Ser169, Ser170, Gln171, Ser197, Asp313, Asn336, and Lys340 each coordinate 3-phosphoshikimate. Position 171 (Gln171) interacts with phosphoenolpyruvate. Asp313 serves as the catalytic Proton acceptor. The phosphoenolpyruvate site is built by Arg344, Arg386, and Lys411.

The protein belongs to the EPSP synthase family. As to quaternary structure, monomer.

The protein resides in the cytoplasm. It carries out the reaction 3-phosphoshikimate + phosphoenolpyruvate = 5-O-(1-carboxyvinyl)-3-phosphoshikimate + phosphate. Its pathway is metabolic intermediate biosynthesis; chorismate biosynthesis; chorismate from D-erythrose 4-phosphate and phosphoenolpyruvate: step 6/7. Functionally, catalyzes the transfer of the enolpyruvyl moiety of phosphoenolpyruvate (PEP) to the 5-hydroxyl of shikimate-3-phosphate (S3P) to produce enolpyruvyl shikimate-3-phosphate and inorganic phosphate. The chain is 3-phosphoshikimate 1-carboxyvinyltransferase from Shigella dysenteriae.